Here is a 368-residue protein sequence, read N- to C-terminus: UDP-N-acetylglucosamine--N-acetylmuramyl-(pentapeptide) pyrophosphoryl-undecaprenol N-acetylglucosamine transferase (368 aa).

UDP-N-acetyl-alpha-D-glucosamine-binding positions include 10–12 (TGG), Asn-126, Ser-200, Ile-255, and Gln-300.

This sequence belongs to the glycosyltransferase 28 family. MurG subfamily.

The protein resides in the cell membrane. The catalysed reaction is Mur2Ac(oyl-L-Ala-gamma-D-Glu-L-Lys-D-Ala-D-Ala)-di-trans,octa-cis-undecaprenyl diphosphate + UDP-N-acetyl-alpha-D-glucosamine = beta-D-GlcNAc-(1-&gt;4)-Mur2Ac(oyl-L-Ala-gamma-D-Glu-L-Lys-D-Ala-D-Ala)-di-trans,octa-cis-undecaprenyl diphosphate + UDP + H(+). Its pathway is cell wall biogenesis; peptidoglycan biosynthesis. In terms of biological role, cell wall formation. Catalyzes the transfer of a GlcNAc subunit on undecaprenyl-pyrophosphoryl-MurNAc-pentapeptide (lipid intermediate I) to form undecaprenyl-pyrophosphoryl-MurNAc-(pentapeptide)GlcNAc (lipid intermediate II). The chain is UDP-N-acetylglucosamine--N-acetylmuramyl-(pentapeptide) pyrophosphoryl-undecaprenol N-acetylglucosamine transferase from Lactobacillus helveticus (strain DPC 4571).